The following is a 485-amino-acid chain: MDLTKLTAHELKDMLSNKEVKAEEITKAFLDRINLVDNKLGAYLYVSEEEAIKKAKEIDVKIEKNEELKALSGIPIGIKDNINVKGMQNTCASKILEGYTSPYDAHVTEKIKQEEGIILGKLNMDEFAMGSSTENSAFKLAKNPWDLERVPGGSSGGSAVAVAGSEATLSLGTDTGGSVRQPASFCGVVGLKPTYGRISRSGVVAFGSTLDQVGPMGKDVEDCALLTSVIAGLDKKDFTTVDKEVPDYKKSLTKDIKGKRIGIPKEFFGDGLDKNIRKSVEEAIKVLEANGAEVKPCSLPLMDYALSAYYIISSAEASSNLARFDGIRYGYRSKNFKDAQDIYLKSRSEGFGDEVKRRIMLGTYVLSAGYYDAYYKKALKVRKLIKDDFQRVFKDFDAIVSPTSPTTAFKVGEKKDDVMSMYLSDIYTVPISVAGVPAISLPCGMVDGLPVGLQIISDYFKEDVLFNLAYSYEQSVDFYKMRADF.

Residues K79 and S154 each act as charge relay system in the active site. The Acyl-ester intermediate role is filled by S178.

Belongs to the amidase family. GatA subfamily. As to quaternary structure, heterotrimer of A, B and C subunits.

It carries out the reaction L-glutamyl-tRNA(Gln) + L-glutamine + ATP + H2O = L-glutaminyl-tRNA(Gln) + L-glutamate + ADP + phosphate + H(+). Functionally, allows the formation of correctly charged Gln-tRNA(Gln) through the transamidation of misacylated Glu-tRNA(Gln) in organisms which lack glutaminyl-tRNA synthetase. The reaction takes place in the presence of glutamine and ATP through an activated gamma-phospho-Glu-tRNA(Gln). In Clostridium botulinum (strain Okra / Type B1), this protein is Glutamyl-tRNA(Gln) amidotransferase subunit A.